The sequence spans 79 residues: Bacteriochlorophyll c-binding protein (79 aa).

His25 contacts a bacteriochlorophyll c.

It belongs to the BChl C/E-binding protein family.

The protein localises to the chlorosome. The protein resides in the chlorosome envelope. Functionally, component of the photosynthetic apparatus. The light harvesting B740 complex binds bacteriochlorophyll c. The sequence is that of Bacteriochlorophyll c-binding protein (csmA) from Chlorobaculum tepidum (strain ATCC 49652 / DSM 12025 / NBRC 103806 / TLS) (Chlorobium tepidum).